Reading from the N-terminus, the 385-residue chain is Cell division protein FtsZ (385 aa).

GTP contacts are provided by residues 20 to 24 (GGGGN), 107 to 109 (GTG), glutamate 138, arginine 142, and asparagine 186.

The protein belongs to the FtsZ family. As to quaternary structure, homodimer. Polymerizes to form a dynamic ring structure in a strictly GTP-dependent manner. Interacts directly with several other division proteins.

Its subcellular location is the cytoplasm. In terms of biological role, essential cell division protein that forms a contractile ring structure (Z ring) at the future cell division site. The regulation of the ring assembly controls the timing and the location of cell division. One of the functions of the FtsZ ring is to recruit other cell division proteins to the septum to produce a new cell wall between the dividing cells. Binds GTP and shows GTPase activity. The protein is Cell division protein FtsZ of Buchnera aphidicola subsp. Baizongia pistaciae (strain Bp).